The sequence spans 87 residues: MAHKKGASSSRNGRDSNAQRLGVKRFGGQSVSAGEILVRQRGTHFHPGVNVGRGGDDTLFALSAGAVEFGTKRGRKTVNIVPAAAEV.

Residues 1-25 (MAHKKGASSSRNGRDSNAQRLGVKR) form a disordered region. Residues 7-19 (ASSSRNGRDSNAQ) are compositionally biased toward polar residues.

It belongs to the bacterial ribosomal protein bL27 family.

This Rhodococcus opacus (strain B4) protein is Large ribosomal subunit protein bL27.